Reading from the N-terminus, the 398-residue chain is G2/mitotic-specific cyclin-B2 (398 aa).

Residue Thr8 is modified to Phosphothreonine. Ser11, Ser77, and Ser92 each carry phosphoserine. At Thr94 the chain carries Phosphothreonine. Ser99, Ser392, and Ser398 each carry phosphoserine.

The protein belongs to the cyclin family. Cyclin AB subfamily. Interacts with the CDK1 protein kinase to form a serine/threonine kinase holoenzyme complex also known as maturation promoting factor (MPF). The cyclin subunit imparts substrate specificity to the complex.

In terms of biological role, essential for the control of the cell cycle at the G2/M (mitosis) transition. The polypeptide is G2/mitotic-specific cyclin-B2 (CCNB2) (Macaca fascicularis (Crab-eating macaque)).